A 345-amino-acid chain; its full sequence is Phosphoribosylformylglycinamidine cyclo-ligase (345 aa).

It belongs to the AIR synthase family.

Its subcellular location is the cytoplasm. It catalyses the reaction 2-formamido-N(1)-(5-O-phospho-beta-D-ribosyl)acetamidine + ATP = 5-amino-1-(5-phospho-beta-D-ribosyl)imidazole + ADP + phosphate + H(+). Its pathway is purine metabolism; IMP biosynthesis via de novo pathway; 5-amino-1-(5-phospho-D-ribosyl)imidazole from N(2)-formyl-N(1)-(5-phospho-D-ribosyl)glycinamide: step 2/2. This Escherichia coli O127:H6 (strain E2348/69 / EPEC) protein is Phosphoribosylformylglycinamidine cyclo-ligase.